Reading from the N-terminus, the 323-residue chain is o-succinylbenzoate synthase (323 aa).

Residue Lys-134 is the Proton donor of the active site. The Mg(2+) site is built by Asp-162, Glu-191, and Asp-214. Lys-236 acts as the Proton acceptor in catalysis.

Belongs to the mandelate racemase/muconate lactonizing enzyme family. MenC type 1 subfamily. Requires a divalent metal cation as cofactor.

The enzyme catalyses (1R,6R)-6-hydroxy-2-succinyl-cyclohexa-2,4-diene-1-carboxylate = 2-succinylbenzoate + H2O. It functions in the pathway quinol/quinone metabolism; 1,4-dihydroxy-2-naphthoate biosynthesis; 1,4-dihydroxy-2-naphthoate from chorismate: step 4/7. The protein operates within quinol/quinone metabolism; menaquinone biosynthesis. Functionally, converts 2-succinyl-6-hydroxy-2,4-cyclohexadiene-1-carboxylate (SHCHC) to 2-succinylbenzoate (OSB). The sequence is that of o-succinylbenzoate synthase from Edwardsiella ictaluri (strain 93-146).